A 132-amino-acid polypeptide reads, in one-letter code: Dinoflagellate viral nucleoprotein 5 (132 aa).

Residues 1–44 are compositionally biased toward basic residues; that stretch reads MAAMKKAMKVKKSAKKSAKKSGKKGGMKKKAKRVSKVARGKRAK. A disordered region spans residues 1–84; it reads MAAMKKAMKV…KKQSEHGKKI (84 aa). Over residues 57-66 the composition is skewed to polar residues; sequence GGLTKNSLVK.

In terms of processing, phosphorylated.

It is found in the nucleus. The protein localises to the chromosome. DNA-binding protein, which similarly to histones, may compact DNA into chromatin. The chain is Dinoflagellate viral nucleoprotein 5 from Hematodinium sp.